Consider the following 490-residue polypeptide: Ribosome biogenesis protein YTM1 (490 aa).

The disordered stretch occupies residues 1–22 (MDGLEDGPLDASTATSQKPQRQ). Residues 23 to 104 (VRLKLTSRHE…ETTLDVEYVR (82 aa)) form a ubiquitin-like (UBL) domain region. WD repeat units lie at residues 116 to 168 (LHDD…IALS), 175 to 213 (GHTA…DGFS), 224 to 263 (GHKG…NPAA), 298 to 338 (SHTA…LVDT), 340 to 379 (TASH…TTVS), 385 to 425 (GHTN…TDKD), and 449 to 487 (GEGV…PNGG). The tract at residues 255–286 (TRKSENPAAPESLLPSNTSRSSKRRKLNSSVS) is disordered.

The protein belongs to the WD repeat WDR12/YTM1 family. As to quaternary structure, component of the NOP7 complex, composed of ERB1, NOP7 and YTM1. The complex is held together by ERB1, which interacts with NOP7 via its N-terminal domain and with YTM1 via a high-affinity interaction between the seven-bladed beta-propeller domains of the 2 proteins. The NOP7 complex associates with the 66S pre-ribosome. Interacts (via UBL domain) with MDN1 (via VWFA/MIDAS domain).

Its subcellular location is the nucleus. It is found in the nucleolus. The protein resides in the nucleoplasm. Component of the NOP7 complex, which is required for maturation of the 25S and 5.8S ribosomal RNAs and formation of the 60S ribosome. This Ajellomyces capsulatus (strain NAm1 / WU24) (Darling's disease fungus) protein is Ribosome biogenesis protein YTM1.